The chain runs to 147 residues: Hemoglobin subunit beta-M (147 aa).

Valine 2 is subject to N-acetylvaline. In terms of domain architecture, Globin spans 3-147 (HLTSEEKNCI…VAHALAHKYH (145 aa)). At threonine 13 the chain carries Phosphothreonine. Serine 45 carries the phosphoserine modification. Lysine 60 carries the post-translational modification N6-acetyllysine. Residue histidine 64 coordinates heme b. Lysine 83 carries the post-translational modification N6-acetyllysine. Histidine 93 serves as a coordination point for heme b. S-nitrosocysteine is present on cysteine 94. The residue at position 145 (lysine 145) is an N6-acetyllysine.

This sequence belongs to the globin family. As to quaternary structure, heterotetramer of two alpha chains and two beta chains. As to expression, red blood cells.

Its function is as follows. Involved in oxygen transport from the lung to the various peripheral tissues. The sequence is that of Hemoglobin subunit beta-M (HBB) from Didelphis virginiana (North American opossum).